The sequence spans 116 residues: Large ribosomal subunit protein bL20 (116 aa).

Belongs to the bacterial ribosomal protein bL20 family.

Its function is as follows. Binds directly to 23S ribosomal RNA and is necessary for the in vitro assembly process of the 50S ribosomal subunit. It is not involved in the protein synthesizing functions of that subunit. The polypeptide is Large ribosomal subunit protein bL20 (Mycoplasmopsis agalactiae (strain NCTC 10123 / CIP 59.7 / PG2) (Mycoplasma agalactiae)).